The primary structure comprises 123 residues: Large ribosomal subunit protein bL12 (123 aa).

The interval 98-123 (KEGVSKEEAEEIKSKLEDAGATVELK) is disordered. The span at 100 to 115 (GVSKEEAEEIKSKLED) shows a compositional bias: basic and acidic residues.

The protein belongs to the bacterial ribosomal protein bL12 family. In terms of assembly, homodimer. Part of the ribosomal stalk of the 50S ribosomal subunit. Forms a multimeric L10(L12)X complex, where L10 forms an elongated spine to which 2 to 4 L12 dimers bind in a sequential fashion. Binds GTP-bound translation factors.

Functionally, forms part of the ribosomal stalk which helps the ribosome interact with GTP-bound translation factors. Is thus essential for accurate translation. The chain is Large ribosomal subunit protein bL12 from Halothermothrix orenii (strain H 168 / OCM 544 / DSM 9562).